Here is a 156-residue protein sequence, read N- to C-terminus: Aspartate 1-decarboxylase (156 aa).

The active-site Schiff-base intermediate with substrate; via pyruvic acid is the Ser26. A Pyruvic acid (Ser) modification is found at Ser26. Thr58 contacts substrate. Tyr59 (proton donor) is an active-site residue. Substrate is bound at residue 74-76 (GGA).

It belongs to the PanD family. As to quaternary structure, heterooctamer of four alpha and four beta subunits. Requires pyruvate as cofactor. In terms of processing, is synthesized initially as an inactive proenzyme, which is activated by self-cleavage at a specific serine bond to produce a beta-subunit with a hydroxyl group at its C-terminus and an alpha-subunit with a pyruvoyl group at its N-terminus.

It is found in the cytoplasm. The catalysed reaction is L-aspartate + H(+) = beta-alanine + CO2. It functions in the pathway cofactor biosynthesis; (R)-pantothenate biosynthesis; beta-alanine from L-aspartate: step 1/1. Functionally, catalyzes the pyruvoyl-dependent decarboxylation of aspartate to produce beta-alanine. The sequence is that of Aspartate 1-decarboxylase from Gloeothece citriformis (strain PCC 7424) (Cyanothece sp. (strain PCC 7424)).